Reading from the N-terminus, the 316-residue chain is Thiamine-monophosphate kinase (316 aa).

D26, T49, and D50 together coordinate Mg(2+). A substrate-binding site is contributed by D57. D79 is a Mg(2+) binding site. ATP is bound by residues Y109, 126 to 127, and R151; that span reads GD. Mg(2+) is bound at residue D127. D198 contacts Mg(2+). S200 lines the ATP pocket. D201 provides a ligand contact to Mg(2+). The substrate site is built by E251 and F305.

Belongs to the thiamine-monophosphate kinase family.

It carries out the reaction thiamine phosphate + ATP = thiamine diphosphate + ADP. The protein operates within cofactor biosynthesis; thiamine diphosphate biosynthesis; thiamine diphosphate from thiamine phosphate: step 1/1. In terms of biological role, catalyzes the ATP-dependent phosphorylation of thiamine-monophosphate (TMP) to form thiamine-pyrophosphate (TPP), the active form of vitamin B1. This chain is Thiamine-monophosphate kinase, found in Rhodopirellula baltica (strain DSM 10527 / NCIMB 13988 / SH1).